A 475-amino-acid chain; its full sequence is Cytosolic non-specific dipeptidase (475 aa).

Ala-2 is modified (N-acetylalanine). Position 9 is an N6-acetyllysine (Lys-9). Ser-58 is subject to Phosphoserine. Position 99 (His-99) interacts with Mn(2+). Asp-101 is an active-site residue. Asp-132 contacts Mn(2+). Glu-166 functions as the Proton acceptor in the catalytic mechanism. Residues 166-167 (EE), Asp-195, and His-228 each bind substrate. Positions 167 and 195 each coordinate Mn(2+). Ser-299 is subject to Phosphoserine. Substrate contacts are provided by Thr-330, Arg-343, Ser-417, and His-445. His-445 serves as a coordination point for Mn(2+).

Belongs to the peptidase M20A family. Homodimer. Requires Mn(2+) as cofactor.

It localises to the cytoplasm. It catalyses the reaction Hydrolysis of dipeptides, preferentially hydrophobic dipeptides including prolyl amino acids.. The enzyme catalyses L-threonyl-L-threonine + H2O = 2 L-threonine. The catalysed reaction is L-threonyl-L-serine + H2O = L-threonine + L-serine. It carries out the reaction L-seryl-L-threonine + H2O = L-threonine + L-serine. It catalyses the reaction L-cysteinylglycine + H2O = L-cysteine + glycine. The enzyme catalyses (S)-lactate + L-phenylalanine = N-[(S)-lactoyl]-L-phenylalanine + H2O. In terms of biological role, catalyzes the peptide bond hydrolysis in dipeptides, displaying a non-redundant activity toward threonyl dipeptides. Mediates threonyl dipeptide catabolism in a tissue-specific way. Has high dipeptidase activity toward cysteinylglycine, an intermediate metabolite in glutathione metabolism. Metabolizes N-lactoyl-amino acids, both through hydrolysis to form lactic acid and amino acids, as well as through their formation by reverse proteolysis. Plays a role in the regulation of cell cycle arrest and apoptosis. The protein is Cytosolic non-specific dipeptidase (CNDP2) of Pongo abelii (Sumatran orangutan).